Reading from the N-terminus, the 353-residue chain is UPF0658 Golgi apparatus membrane protein C23H3.04 (353 aa).

8 helical membrane-spanning segments follow: residues 39–59, 76–96, 103–123, 172–192, 226–246, 249–269, 281–301, and 318–338; these read IFFL…EGYC, SLPI…YLCV, NIIE…YSIV, PFLI…GFLA, LLKI…MVLP, AVVE…ILTL, LMMT…FKII, and MITT…AIGF.

It belongs to the UPF0658 family.

Its subcellular location is the golgi apparatus membrane. This is UPF0658 Golgi apparatus membrane protein C23H3.04 from Schizosaccharomyces pombe (strain 972 / ATCC 24843) (Fission yeast).